Here is a 101-residue protein sequence, read N- to C-terminus: MMSLLTPAVLLTQRSHTLTLSVSTPLGLVMTTYESSTLKDARLKLVSQKEVNGKLHLTLGAGRLLYIIRIFLATGTTQFLTMVLPSTASVDSLPGTYLRRC.

This sequence belongs to the orthobunyavirus NS-S protein family.

In terms of biological role, inhibits host transcriptional machinery, by producing modifications to the phosphorylation state of the C-terminal domain (CTD) of RNA polymerase II. Inhibits phosphorylation at serine 2 in the heptapeptide repeat (YSPTSPS) of the CTD of RNA polymerase II, suggesting that the elongation step of transcription and/or 3'-end processing is prevented. Inhibition of host transcription machinery leads to shut off of host cell protein synthesis and inhibition of the host innate immune response. NSs also seems to be involved in the nuclear relocalization of host PABP1. This Bunyamwera virus (BUNV) protein is Non-structural protein NS-S (N).